A 404-amino-acid chain; its full sequence is G-protein coupled receptor 143 (404 aa).

The Extracellular segment spans residues 1–28 (MASPRLGTFCCPTRDAATQLVLSFQPRA). Residues 29–49 (FHALCLGSGGLRLALGLLQLL) form a helical membrane-spanning segment. The Cytoplasmic portion of the chain corresponds to 50 to 78 (PGRRPAGPGSPATSPPASVRILRAAAACD). Residues 79-99 (LLGCLGMVIRSTVWLGFPNFV) traverse the membrane as a helical segment. The Extracellular segment spans residues 100 to 124 (DSVSDMNHTEIWPAAFCVGSAMWIQ). Residue Asn106 is glycosylated (N-linked (GlcNAc...) asparagine). Residues 125 to 145 (LLYSACFWWLFCYAVDAYLVI) traverse the membrane as a helical segment. Over 146–149 (RRSA) the chain is Cytoplasmic. The helical transmembrane segment at 150–170 (GLSTILLYHIMAWGLATLLCV) threads the bilayer. The Extracellular portion of the chain corresponds to 171–191 (EGAAMLYYPSVSRCERGLDHA). Residues 192–212 (IPHYVTMYLPLLLVLVANPIL) form a helical membrane-spanning segment. Over 213–248 (FQKTVTAVASLLKGRQGIYTENERRMGAVIKIRFFK) the chain is Cytoplasmic. Residues 221 to 238 (ASLLKGRQGIYTENERRM) form a necessary for its G protein-activation ability and normal distribution of melanosomes region. The short motif at 222 to 231 (SLLKGRQGIY) is the lysosomal/melanosomal membrane localization signal element. Residues 249 to 269 (IMLVLIICWLSNIINESLLFY) form a helical membrane-spanning segment. The Extracellular segment spans residues 270–292 (LEMQTDINGGSLKPVRTAAKTTW). The helical transmembrane segment at 293–313 (FIMGILNPAQGFLLSLAFYGW) threads the bilayer. The Cytoplasmic segment spans residues 314–404 (TGCSLGFQSP…DPALPTHGDL (91 aa)). The short motif at 329–330 (WE) is the lysosomal/melanosomal membrane localization signal element. The tract at residues 338–404 (EGAHPSPLMP…DPALPTHGDL (67 aa)) is disordered. Residues 355–366 (KVSQVGGQTSDE) are compositionally biased toward polar residues.

The protein belongs to the G-protein coupled receptor OA family. In terms of assembly, interacts with heterotrimeric G(i) proteins. Interacts with ARRB1 and ARRB2. Interacts with MLANA. In terms of processing, glycosylated. Phosphorylated. Expressed at high levels in the retina, including the retinal pigment epithelium (RPE), and in melanocytes. Weak expression is observed in brain and adrenal gland.

Its subcellular location is the melanosome membrane. The protein localises to the lysosome membrane. It localises to the apical cell membrane. Receptor for tyrosine, L-DOPA and dopamine. After binding to L-DOPA, stimulates Ca(2+) influx into the cytoplasm, increases secretion of the neurotrophic factor SERPINF1 and relocalizes beta arrestin at the plasma membrane; this ligand-dependent signaling occurs through a G(q)-mediated pathway in melanocytic cells. Its activity is mediated by G proteins which activate the phosphoinositide signaling pathway. Also plays a role as an intracellular G protein-coupled receptor involved in melanosome biogenesis, organization and transport. This is G-protein coupled receptor 143 (GPR143) from Homo sapiens (Human).